We begin with the raw amino-acid sequence, 222 residues long: MIFVENKEIVLPGSLLTDNNYKLGRGTYKENGKIYSSITGLVYFESEQIKVIPLKDTYSPNYGDLVIGRVTGSSYSSWSIDINSTYHGFLPTTELYDKNEPNINNIINIKDMLLLRVANVDEINRVKLTLRSRGLGKFNQGTIIKVKQPTIHFLSEENAFLTTMIQEYTYTDVIIGKNGLIWINGLKENIERIIEIIELIEKEEPLKHNLIKHIQSMILNPK.

The 69-residue stretch at 63–131 folds into the S1 motif domain; that stretch reads GDLVIGRVTG…EINRVKLTLR (69 aa).

The protein belongs to the RRP4 family. As to quaternary structure, component of the archaeal exosome complex. Forms a trimer of Rrp4 and/or Csl4 subunits. The trimer associates with a hexameric ring-like arrangement composed of 3 Rrp41-Rrp42 heterodimers.

It localises to the cytoplasm. Non-catalytic component of the exosome, which is a complex involved in RNA degradation. Increases the RNA binding and the efficiency of RNA degradation. Confers strong poly(A) specificity to the exosome. The polypeptide is Exosome complex component Rrp4 (Methanosphaera stadtmanae (strain ATCC 43021 / DSM 3091 / JCM 11832 / MCB-3)).